The primary structure comprises 239 residues: Ribonuclease HII (239 aa).

The region spanning 30–221 (GPVAGVDEVG…VRRLVTAGTP (192 aa)) is the RNase H type-2 domain. 3 residues coordinate a divalent metal cation: aspartate 36, glutamate 37, and aspartate 130.

The protein belongs to the RNase HII family. It depends on Mn(2+) as a cofactor. Mg(2+) is required as a cofactor.

It localises to the cytoplasm. It carries out the reaction Endonucleolytic cleavage to 5'-phosphomonoester.. Functionally, endonuclease that specifically degrades the RNA of RNA-DNA hybrids. The polypeptide is Ribonuclease HII (Mycobacterium sp. (strain KMS)).